Here is a 249-residue protein sequence, read N- to C-terminus: MMGEQLDYLLNIVKNDKKFLETLKNMKIDVDSDEELSKIFFIIITFPFWLRCHDDIKNALRLIDKITNKGSFTKVLDNSMKEYHVFYIYDVDKLSDLIAEELKRLYLICKSEGKSYYENIFFRLDRKSILKLFMKISPFKQLDVIKGKLKNQLDFFEEYFNNIEKIGYFSIRMENSRYNEHIKSLHPKLIISLRVDKVHIRLEAQIDYYNINNENEEAYKKILELMKLNLLTIGYKAVEKFLEEIYEEV.

This is an uncharacterized protein from Methanocaldococcus jannaschii (strain ATCC 43067 / DSM 2661 / JAL-1 / JCM 10045 / NBRC 100440) (Methanococcus jannaschii).